A 258-amino-acid chain; its full sequence is UPF0246 protein VS_0505 (258 aa).

This sequence belongs to the UPF0246 family.

This Vibrio atlanticus (strain LGP32) (Vibrio splendidus (strain Mel32)) protein is UPF0246 protein VS_0505.